Here is a 331-residue protein sequence, read N- to C-terminus: 4-hydroxythreonine-4-phosphate dehydrogenase (331 aa).

Substrate is bound by residues H137 and T138. A divalent metal cation is bound by residues H167, H212, and H267. Substrate-binding residues include K275, N284, and R293.

This sequence belongs to the PdxA family. As to quaternary structure, homodimer. It depends on Zn(2+) as a cofactor. Requires Mg(2+) as cofactor. Co(2+) serves as cofactor.

The protein resides in the cytoplasm. It catalyses the reaction 4-(phosphooxy)-L-threonine + NAD(+) = 3-amino-2-oxopropyl phosphate + CO2 + NADH. It participates in cofactor biosynthesis; pyridoxine 5'-phosphate biosynthesis; pyridoxine 5'-phosphate from D-erythrose 4-phosphate: step 4/5. Its function is as follows. Catalyzes the NAD(P)-dependent oxidation of 4-(phosphooxy)-L-threonine (HTP) into 2-amino-3-oxo-4-(phosphooxy)butyric acid which spontaneously decarboxylates to form 3-amino-2-oxopropyl phosphate (AHAP). This is 4-hydroxythreonine-4-phosphate dehydrogenase from Yersinia enterocolitica serotype O:8 / biotype 1B (strain NCTC 13174 / 8081).